The chain runs to 307 residues: Ribosomal protein L11 methyltransferase (307 aa).

Positions 154, 178, 200, and 242 each coordinate S-adenosyl-L-methionine.

Belongs to the methyltransferase superfamily. PrmA family.

It localises to the cytoplasm. It catalyses the reaction L-lysyl-[protein] + 3 S-adenosyl-L-methionine = N(6),N(6),N(6)-trimethyl-L-lysyl-[protein] + 3 S-adenosyl-L-homocysteine + 3 H(+). In terms of biological role, methylates ribosomal protein L11. The polypeptide is Ribosomal protein L11 methyltransferase (Syntrophotalea carbinolica (strain DSM 2380 / NBRC 103641 / GraBd1) (Pelobacter carbinolicus)).